Reading from the N-terminus, the 109-residue chain is Flagellar hook-basal body complex protein FliE (109 aa).

The interval 1-38 (MQAIHNDKSLLSPFSELNTDNRTKREESGNAFKEQKGG) is disordered. Residues 19 to 38 (TDNRTKREESGNAFKEQKGG) show a composition bias toward basic and acidic residues.

Belongs to the FliE family.

Its subcellular location is the bacterial flagellum basal body. The protein is Flagellar hook-basal body complex protein FliE of Helicobacter pylori (strain G27).